Here is a 132-residue protein sequence, read N- to C-terminus: uncharacterized protein (132 aa).

It belongs to the mycobacterial PPE family.

This is an uncharacterized protein from Mycobacterium tuberculosis (strain ATCC 25618 / H37Rv).